The chain runs to 303 residues: HTH-type transcriptional regulator CatM (303 aa).

The region spanning 1 to 58 is the HTH lysR-type domain; it reads MELRHLRYFVTVVEEQSISKAAEKLCIAQPPLSRQIQKLEEELGIQLFERGFRPAKVT. The H-T-H motif DNA-binding region spans 18-37; it reads ISKAAEKLCIAQPPLSRQIQ. Serine 99 and threonine 128 together coordinate cis,cis-muconate.

This sequence belongs to the LysR transcriptional regulatory family. Homotetramer in solution.

Its function is as follows. Positively regulates the expression of catA, catBCIJFD and benPK in response to cis,cis-muconate. It binds to the catB-catM intercistronic region, to a specific sequence upstream of catA and to the benPK promoter region. Can also repress pca genes. This is HTH-type transcriptional regulator CatM (catM) from Acinetobacter baylyi (strain ATCC 33305 / BD413 / ADP1).